The primary structure comprises 265 residues: Mlc titration factor A (265 aa).

His111, His148, His152, and Glu211 together coordinate Zn(2+).

The protein belongs to the MtfA family. Interacts with Mlc. Requires Zn(2+) as cofactor.

It localises to the cytoplasm. Functionally, involved in the modulation of the activity of the glucose-phosphotransferase system (glucose-PTS). Interacts with the transcriptional repressor Mlc, preventing its interaction with DNA and leading to the modulation of expression of genes regulated by Mlc, including ptsG, which encodes the PTS system glucose-specific EIICB component. In terms of biological role, shows zinc-dependent metallopeptidase activity. In Salmonella schwarzengrund (strain CVM19633), this protein is Mlc titration factor A.